Consider the following 404-residue polypeptide: MVENIQTEADAFGFFGNYGGQYVPETLMPAIQELKQAYQDAKNDPQFQIELDDYLKDYVGRETPLTYAKSYSELLGGAKIYLKREDLNHTGAHKINNALGQALLAKRMGKNKLVAETGAGQHGVASATVAALFDMELVVFMGEEDIKRQSLNVFRMELLGAKVESVTEGQGTLSDAVNKALQYWVSHVDDTHYLLGSALGPDPFPTIVRDFQKIIGQEIKAQVHEKEGQLPDAIVACVGGGSNAIGTFYPFVKDDVKLYGVEAAGDGIDSDKHALAINKGKEGVLHGTKMYLIQDDDGQIQLAHSISAGLDYPGVGPEHSYYHDIGRVKYATASDKQAMDALVRFTKAEGIIPAIESAHALSYVETLAPTMRNDEILVVTVSGRGDKDMETIRNYMKQEGDTHA.

Residue K94 is modified to N6-(pyridoxal phosphate)lysine.

It belongs to the TrpB family. In terms of assembly, tetramer of two alpha and two beta chains. The cofactor is pyridoxal 5'-phosphate.

The catalysed reaction is (1S,2R)-1-C-(indol-3-yl)glycerol 3-phosphate + L-serine = D-glyceraldehyde 3-phosphate + L-tryptophan + H2O. It functions in the pathway amino-acid biosynthesis; L-tryptophan biosynthesis; L-tryptophan from chorismate: step 5/5. The beta subunit is responsible for the synthesis of L-tryptophan from indole and L-serine. This is Tryptophan synthase beta chain from Staphylococcus saprophyticus subsp. saprophyticus (strain ATCC 15305 / DSM 20229 / NCIMB 8711 / NCTC 7292 / S-41).